Reading from the N-terminus, the 1241-residue chain is MRSQAKTETVSSKSSRNTHVIFRFADWIDIVLMVLGSVGAIGDGMSTNVSLVFVSRIMNTLGYSQHNPSSTNFKEEIQKCSLYFVYLGLAILGVAFMEGYCWSKTSERQVMKIRRTYLEAVLRQEVSFFDSDISTSEIIHTISTDTSLIQQLLSEKVPIFLMHISVFITGLVFSAYFSWRLTVVAIPTLVLLLIPGLIYGKYLVHLSKKSFKEYTKANSIVEQALSSIKTILSFTAETQIIKKYSEVLERHKKLGLKQGLAKGLAVGSSGISFTIWAFLAWYGSRLVMHKQETGGRIYAAGISFVLGGISLGTALTEIRYFSEASVAAARICSRIDRISEIDGEDTKKGFIPGEKMKGRVEFERVTLVYLSRPETIILKDFTLTVDVGQSVALMGASGSGKSTVIALLQRFYDPCEGFVRIDGFDIKTLQLKWMRQHIGVVSQDHALFGTSIMENLMFGKNKASMDEVISAAKAANAHGFITQLPNGYDTHIGNRGALLSGGQKQRIAIARAIIRNPVILLLDEATSALDGESETLIQNALDQVAAGRTTLVVAHKLSTVRGANIIAMLENGSVRELGSHEDLMTKNNHYAKLVKLQRQFGHEHQQDLQDRVNSPEIQQRWSTMNSVIRLSNRSSPDLIVSPITLESNHTTKINENIPSTSFTRLLPFVSPEWKSSLVGCISATTFGAIQPVYALSIGGMISAFFAKSSQEMQDKIHIYSLIFISLTFLSITLNLLQHYSFAKMGERLMQRLRLKMLEKIFTFEPAWFDVEENFTSEICSRLNNEVSIVKSLVADRISLLVQTISGVTIAMIIGLLISWKLALVMIAVQPLSILCFYTKKVLLSKISNNYAYAQNRSSQIASEAIYNHKIVTSLGSTKKIIEIFDNAQYEAKRKGRKAAWLAGFGMGSAQCLTFLTWALDFWYGGVLVQKGEISAGDVFKTFFVLVSTGKVIAEAGSMTSDLAKGTAAISSVFNILDRPSSHENTNHGEKMGTIQGRIELKNIDFSYPNRPSILVLRDFSLDIKPGTSIGLVGTSGCGKSTVIALIQRFYDVEIGCVKIDSENLRDINIKWYRKHTALVSQEPVVYSGSIQDNIILGRPEATEDEVVEAAKAANAHDFISAMEKGYKTECGERGVQLSGGQKQRIAIARAFLRSPIILLLDEVTSSLDSNSEQEVQDALARIMASRNMTTVVVAHRLNTLKNLDCIALIVDGTVIETGSYDHLKNIGGQFSRLAHAHDLKS.

A helical transmembrane segment spans residues 24 to 44; it reads FADWIDIVLMVLGSVGAIGDG. Residues 33–323 form the ABC transmembrane type-1 1 domain; it reads MVLGSVGAIG…ALTEIRYFSE (291 aa). An N-linked (GlcNAc...) asparagine glycan is attached at Asn48. The next 5 membrane-spanning stretches (helical) occupy residues 82-102, 157-177, 183-203, 263-283, and 297-317; these read LYFVYLGLAILGVAFMEGYCW, VPIFLMHISVFITGLVFSAYF, VVAIPTLVLLLIPGLIYGKYL, GLAVGSSGISFTIWAFLAWYG, and IYAAGISFVLGGISLGTALTE. The ABC transporter 1 domain occupies 360 to 596; the sequence is VEFERVTLVY…NNHYAKLVKL (237 aa). 395-402 contributes to the ATP binding site; the sequence is GASGSGKS. N-linked (GlcNAc...) asparagine glycans are attached at residues Asn571, Asn632, and Asn648. Positions 676 to 964 constitute an ABC transmembrane type-1 2 domain; sequence SLVGCISATT…AGSMTSDLAK (289 aa). 2 helical membrane-spanning segments follow: residues 686 to 706 and 716 to 736; these read FGAIQPVYALSIGGMISAFFA and IHIYSLIFISLTFLSITLNLL. An N-linked (GlcNAc...) asparagine glycan is attached at Asn773. 2 helical membrane passes run 797–815 and 821–838; these read ISLLVQTISGVTIAMIIGL and LALVMIAVQPLSILCFYT. Residue Asn855 is glycosylated (N-linked (GlcNAc...) asparagine). The next 2 membrane-spanning stretches (helical) occupy residues 899-919 and 933-953; these read AWLAGFGMGSAQCLTFLTWAL and ISAGDVFKTFFVLVSTGKVIA. One can recognise an ABC transporter 2 domain in the interval 998-1236; the sequence is IELKNIDFSY…GGQFSRLAHA (239 aa). Residue 1033 to 1040 participates in ATP binding; sequence GTSGCGKS. N-linked (GlcNAc...) asparagine glycosylation occurs at Asn1187.

It belongs to the ABC transporter superfamily. ABCB family. Multidrug resistance exporter (TC 3.A.1.201) subfamily.

It is found in the membrane. This Arabidopsis thaliana (Mouse-ear cress) protein is Putative ABC transporter B family member 8 (ABCB8).